Here is a 392-residue protein sequence, read N- to C-terminus: Speckle-type POZ protein-like B (392 aa).

The 131-residue stretch at 31–161 (KFSYMWTINN…DDKLTLFCEV (131 aa)) folds into the MATH domain. Residues 200-267 (TDCSLFVGGQ…IYTGKAPNLE (68 aa)) form the BTB domain.

Belongs to the Tdpoz family. Homodimer. Heterodimer with SPOP. Component of cullin-RING-based BCR (BTB-CUL3-RBX1) E3 ubiquitin-protein ligase complexes containing homodimeric SPOPL or the heterodimer formed by SPOP and SPOPL.

Its subcellular location is the nucleus. Its pathway is protein modification; protein ubiquitination. In terms of biological role, component of a cullin-RING-based BCR (BTB-CUL3-RBX1) E3 ubiquitin-protein ligase complex that mediates the ubiquitination and subsequent proteasomal degradation of target proteins, but with relatively low efficiency. The protein is Speckle-type POZ protein-like B (spoplb) of Danio rerio (Zebrafish).